A 132-amino-acid polypeptide reads, in one-letter code: Small ribosomal subunit protein uS11 (132 aa).

A compositionally biased stretch (basic residues) spans 1 to 16 (MAAGMKGKRSRRRKER). The interval 1-20 (MAAGMKGKRSRRRKERKNVE) is disordered.

It belongs to the universal ribosomal protein uS11 family. Part of the 30S ribosomal subunit. Interacts with proteins S7 and S18. Binds to IF-3.

In terms of biological role, located on the platform of the 30S subunit, it bridges several disparate RNA helices of the 16S rRNA. Forms part of the Shine-Dalgarno cleft in the 70S ribosome. This is Small ribosomal subunit protein uS11 from Clostridium botulinum (strain Kyoto / Type A2).